The chain runs to 257 residues: Imidazole glycerol phosphate synthase subunit HisF (257 aa).

Residues Asp11 and Asp130 contribute to the active site.

The protein belongs to the HisA/HisF family. Heterodimer of HisH and HisF.

Its subcellular location is the cytoplasm. It catalyses the reaction 5-[(5-phospho-1-deoxy-D-ribulos-1-ylimino)methylamino]-1-(5-phospho-beta-D-ribosyl)imidazole-4-carboxamide + L-glutamine = D-erythro-1-(imidazol-4-yl)glycerol 3-phosphate + 5-amino-1-(5-phospho-beta-D-ribosyl)imidazole-4-carboxamide + L-glutamate + H(+). Its pathway is amino-acid biosynthesis; L-histidine biosynthesis; L-histidine from 5-phospho-alpha-D-ribose 1-diphosphate: step 5/9. Its function is as follows. IGPS catalyzes the conversion of PRFAR and glutamine to IGP, AICAR and glutamate. The HisF subunit catalyzes the cyclization activity that produces IGP and AICAR from PRFAR using the ammonia provided by the HisH subunit. The polypeptide is Imidazole glycerol phosphate synthase subunit HisF (Aliivibrio salmonicida (strain LFI1238) (Vibrio salmonicida (strain LFI1238))).